A 263-amino-acid polypeptide reads, in one-letter code: Putative alpha/beta hydrolase L404 (263 aa).

A lipid anchor (N-myristoyl glycine; by host) is attached at G2.

It belongs to the AB hydrolase superfamily.

This chain is Putative alpha/beta hydrolase L404, found in Acanthamoeba polyphaga (Amoeba).